Here is a 252-residue protein sequence, read N- to C-terminus: Imidazole glycerol phosphate synthase subunit HisF (252 aa).

Catalysis depends on residues D11 and D130.

This sequence belongs to the HisA/HisF family. As to quaternary structure, heterodimer of HisH and HisF.

The protein resides in the cytoplasm. It carries out the reaction 5-[(5-phospho-1-deoxy-D-ribulos-1-ylimino)methylamino]-1-(5-phospho-beta-D-ribosyl)imidazole-4-carboxamide + L-glutamine = D-erythro-1-(imidazol-4-yl)glycerol 3-phosphate + 5-amino-1-(5-phospho-beta-D-ribosyl)imidazole-4-carboxamide + L-glutamate + H(+). It functions in the pathway amino-acid biosynthesis; L-histidine biosynthesis; L-histidine from 5-phospho-alpha-D-ribose 1-diphosphate: step 5/9. In terms of biological role, IGPS catalyzes the conversion of PRFAR and glutamine to IGP, AICAR and glutamate. The HisF subunit catalyzes the cyclization activity that produces IGP and AICAR from PRFAR using the ammonia provided by the HisH subunit. The sequence is that of Imidazole glycerol phosphate synthase subunit HisF from Staphylococcus epidermidis (strain ATCC 35984 / DSM 28319 / BCRC 17069 / CCUG 31568 / BM 3577 / RP62A).